The following is a 404-amino-acid chain: Glycosylated lysosomal membrane protein B (404 aa).

An N-terminal signal peptide occupies residues methionine 1–glycine 24. The Lumenal portion of the chain corresponds to glutamine 25–serine 364. N-linked (GlcNAc...) asparagine glycosylation is found at asparagine 85, asparagine 124, asparagine 128, asparagine 142, asparagine 152, asparagine 156, asparagine 163, asparagine 168, asparagine 178, asparagine 189, asparagine 205, asparagine 221, asparagine 266, asparagine 303, and asparagine 330. The chain crosses the membrane as a helical span at residues isoleucine 365–glycine 385. The Cytoplasmic portion of the chain corresponds to threonine 386–asparagine 404. The Lysosomal targeting motif motif lies at tyrosine 400–asparagine 404.

It belongs to the GLMP family. In terms of assembly, interacts (via lumenal domain) with lysosomal protein MFSD1; the interaction starts while both proteins are still in the endoplasmic reticulum and is required for stabilization of MFSD1 in lysosomes but has no direct effect on its targeting to lysosomes or transporter activity.

The protein localises to the lysosome membrane. Functionally, required to protect lysosomal transporter MFSD1 from lysosomal proteolysis and for MFSD1 lysosomal localization. This is Glycosylated lysosomal membrane protein B (glmp-b) from Xenopus laevis (African clawed frog).